A 383-amino-acid polypeptide reads, in one-letter code: Succinyl-diaminopimelate desuccinylase (383 aa).

Histidine 72 lines the Zn(2+) pocket. The active site involves aspartate 74. Residue aspartate 105 participates in Zn(2+) binding. Glutamate 139 (proton acceptor) is an active-site residue. Zn(2+)-binding residues include glutamate 140, glutamate 168, and histidine 356.

This sequence belongs to the peptidase M20A family. DapE subfamily. As to quaternary structure, homodimer. Requires Zn(2+) as cofactor. Co(2+) is required as a cofactor.

The catalysed reaction is N-succinyl-(2S,6S)-2,6-diaminopimelate + H2O = (2S,6S)-2,6-diaminopimelate + succinate. The protein operates within amino-acid biosynthesis; L-lysine biosynthesis via DAP pathway; LL-2,6-diaminopimelate from (S)-tetrahydrodipicolinate (succinylase route): step 3/3. In terms of biological role, catalyzes the hydrolysis of N-succinyl-L,L-diaminopimelic acid (SDAP), forming succinate and LL-2,6-diaminopimelate (DAP), an intermediate involved in the bacterial biosynthesis of lysine and meso-diaminopimelic acid, an essential component of bacterial cell walls. This chain is Succinyl-diaminopimelate desuccinylase, found in Beijerinckia indica subsp. indica (strain ATCC 9039 / DSM 1715 / NCIMB 8712).